The primary structure comprises 908 residues: MVCEGKRSASCPCFFLLTAKFYWILTMMQRTHSQEYAHSIRVDGDIILGGLFPVHAKGERGVPCGELKKEKGIHRLEAMLYAIDQINKDPDLLSNITLGVRILDTCSRDTYALEQSLTFVQALIEKDASDVKCANGDPPIFTKPDKISGVIGAAASSVSIMVANILRLFKIPQISYASTAPELSDNTRYDFFSRVVPPDSYQAQAMVDIVTALGWNYVSTLASEGNYGESGVEAFTQISREIGGVCIAQSQKIPREPRPGEFEKIIKRLLETPNARAVIMFANEDDIRRILEAAKKLNQSGHFLWIGSDSWGSKIAPVYQQEEIAEGAVTILPKRASIDGFDRYFRSRTLANNRRNVWFAEFWEENFGCKLGSHGKRNSHIKKCTGLERIARDSSYEQEGKVQFVIDAVYSMAYALHNMHKDLCPGYIGLCPRMSTIDGKELLGYIRAVNFNGSAGTPVTFNENGDAPGRYDIFQYQITNKSTEYKVIGHWTNQLHLKVEDMQWAHREHTHPASVCSLPCKPGERKKTVKGVPCCWHCERCEGYNYQVDELSCELCPLDQRPNMNRTGCQLIPIIKLEWHSPWAVVPVFVAILGIIATTFVIVTFVRYNDTPIVRASGRELSYVLLTGIFLCYSITFLMIAAPDTIICSFRRVFLGLGMCFSYAALLTKTNRIHRIFEQGKKSVTAPKFISPASQLVITFSLISVQLLGVFVWFVVDPPHIIIDYGEQRTLDPEKARGVLKCDISDLSLICSLGYSILLMVTCTVYAIKTRGVPETFNEAKPIGFTMYTTCIIWLAFIPIFFGTAQSAEKMYIQTTTLTVSMSLSASVSLGMLYMPKVYIIIFHPEQNVQKRKRSFKAVVTAATMQSKLIQKGNDRPNGEVKSELCESLETNTSSTKTTYISYSNHSI.

Residues 1-33 (MVCEGKRSASCPCFFLLTAKFYWILTMMQRTHS) form the signal peptide. Topologically, residues 34 to 583 (QEYAHSIRVD…IIKLEWHSPW (550 aa)) are extracellular. Cysteines 64 and 106 form a disulfide. Residue N95 is glycosylated (N-linked (GlcNAc...) asparagine). L-glutamate contacts are provided by residues S156, 177–179 (AST), and Y227. 7 disulfides stabilise this stretch: C246-C534, C369-C384, C424-C431, C516-C535, C520-C538, C541-C553, and C556-C569. N-linked (GlcNAc...) asparagine glycosylation is present at N298. D309 is a binding site for L-glutamate. K401 is an L-glutamate binding site. N-linked (GlcNAc...) asparagine glycosylation is found at N452 and N480. An N-linked (GlcNAc...) asparagine glycan is attached at N565. The chain crosses the membrane as a helical span at residues 584–608 (AVVPVFVAILGIIATTFVIVTFVRY). At 609-620 (NDTPIVRASGRE) the chain is on the cytoplasmic side. A helical membrane pass occupies residues 621 to 641 (LSYVLLTGIFLCYSITFLMIA). Topologically, residues 642-647 (APDTII) are extracellular. A helical transmembrane segment spans residues 648-668 (CSFRRVFLGLGMCFSYAALLT). Topologically, residues 669-695 (KTNRIHRIFEQGKKSVTAPKFISPASQ) are cytoplasmic. A helical membrane pass occupies residues 696–716 (LVITFSLISVQLLGVFVWFVV). Residues 717–746 (DPPHIIIDYGEQRTLDPEKARGVLKCDISD) lie on the Extracellular side of the membrane. Residues 747–768 (LSLICSLGYSILLMVTCTVYAI) form a helical membrane-spanning segment. Topologically, residues 769–781 (KTRGVPETFNEAK) are cytoplasmic. A helical transmembrane segment spans residues 782–803 (PIGFTMYTTCIIWLAFIPIFFG). Residues 804–818 (TAQSAEKMYIQTTTL) are Extracellular-facing. A helical membrane pass occupies residues 819-843 (TVSMSLSASVSLGMLYMPKVYIIIF). Residues 844 to 908 (HPEQNVQKRK…TYISYSNHSI (65 aa)) are Cytoplasmic-facing. A Glycyl lysine isopeptide (Lys-Gly) (interchain with G-Cter in SUMO1) cross-link involves residue K882.

The protein belongs to the G-protein coupled receptor 3 family. As to quaternary structure, interacts with PICK1.

It localises to the cell membrane. In terms of biological role, G-protein coupled receptor for glutamate. Ligand binding causes a conformation change that triggers signaling via guanine nucleotide-binding proteins (G proteins) and modulates the activity of down-stream effectors, such as adenylate cyclase. Signaling inhibits adenylate cyclase activity. This Homo sapiens (Human) protein is Metabotropic glutamate receptor 8 (GRM8).